Consider the following 89-residue polypeptide: MALTQLRKQEIISNYQVHETDTGSADVQVAMLTERINRLSEHLQANKKDHSSRRGLLKLIGQRKRLLAYISQESREKYQALIARLGIRG.

Belongs to the universal ribosomal protein uS15 family. As to quaternary structure, part of the 30S ribosomal subunit. Forms a bridge to the 50S subunit in the 70S ribosome, contacting the 23S rRNA.

Its function is as follows. One of the primary rRNA binding proteins, it binds directly to 16S rRNA where it helps nucleate assembly of the platform of the 30S subunit by binding and bridging several RNA helices of the 16S rRNA. Forms an intersubunit bridge (bridge B4) with the 23S rRNA of the 50S subunit in the ribosome. In Nostoc punctiforme (strain ATCC 29133 / PCC 73102), this protein is Small ribosomal subunit protein uS15.